Consider the following 499-residue polypeptide: Aspartyl/glutamyl-tRNA(Asn/Gln) amidotransferase subunit B (499 aa).

The protein belongs to the GatB/GatE family. GatB subfamily. Heterotrimer of A, B and C subunits.

It catalyses the reaction L-glutamyl-tRNA(Gln) + L-glutamine + ATP + H2O = L-glutaminyl-tRNA(Gln) + L-glutamate + ADP + phosphate + H(+). It carries out the reaction L-aspartyl-tRNA(Asn) + L-glutamine + ATP + H2O = L-asparaginyl-tRNA(Asn) + L-glutamate + ADP + phosphate + 2 H(+). Its function is as follows. Allows the formation of correctly charged Asn-tRNA(Asn) or Gln-tRNA(Gln) through the transamidation of misacylated Asp-tRNA(Asn) or Glu-tRNA(Gln) in organisms which lack either or both of asparaginyl-tRNA or glutaminyl-tRNA synthetases. The reaction takes place in the presence of glutamine and ATP through an activated phospho-Asp-tRNA(Asn) or phospho-Glu-tRNA(Gln). The sequence is that of Aspartyl/glutamyl-tRNA(Asn/Gln) amidotransferase subunit B from Leifsonia xyli subsp. xyli (strain CTCB07).